The following is a 582-amino-acid chain: Aspartate--tRNA ligase (582 aa).

Position 174 (glutamate 174) interacts with L-aspartate. Residues 198 to 201 (QITK) are aspartate. Arginine 220 is an L-aspartate binding site. Residues 220 to 222 (RDE) and glutamine 229 contribute to the ATP site. L-aspartate is bound at residue histidine 443. Residue glutamate 477 coordinates ATP. Arginine 484 is an L-aspartate binding site. 529 to 532 (GLDR) contacts ATP.

Belongs to the class-II aminoacyl-tRNA synthetase family. Type 1 subfamily. In terms of assembly, homodimer.

It is found in the cytoplasm. The catalysed reaction is tRNA(Asp) + L-aspartate + ATP = L-aspartyl-tRNA(Asp) + AMP + diphosphate. In terms of biological role, catalyzes the attachment of L-aspartate to tRNA(Asp) in a two-step reaction: L-aspartate is first activated by ATP to form Asp-AMP and then transferred to the acceptor end of tRNA(Asp). The chain is Aspartate--tRNA ligase from Streptococcus pyogenes serotype M28 (strain MGAS6180).